We begin with the raw amino-acid sequence, 312 residues long: Taste receptor type 2 member 103 (312 aa).

Topologically, residues 1-16 (MVVTMRAALRLMLIST) are extracellular. Residues 17-37 (VSLELIIGILANVFIALVNII) form a helical membrane-spanning segment. At 38–65 (DWIKRGKISAVDKIYMGLAISRTAFVLS) the chain is on the cytoplasmic side. A helical transmembrane segment spans residues 66-86 (VITGFLIAFLDPASLGIGIMI). The Extracellular segment spans residues 87-92 (RLLTMS). Residues 93–113 (WTVTNHFSVWFATCLSIFYFL) traverse the membrane as a helical segment. The Cytoplasmic portion of the chain corresponds to 114 to 133 (KITNFSNTVFLALKWKVKKV). The chain crosses the membrane as a helical span at residues 134 to 154 (VSVTLVVSLIILFINVIVIHI). Over 155-184 (YTDRFQVNMVQKCGANNTLRAYGLFLSIST) the chain is Extracellular. N170 is a glycosylation site (N-linked (GlcNAc...) asparagine). A helical membrane pass occupies residues 185-205 (VFTFIPFTASLTMFLLLIFSL). The Cytoplasmic portion of the chain corresponds to 206–229 (WRHLKTMHHNATGSRDVSTVAHIK). A helical membrane pass occupies residues 230–250 (GLQTVVAFLLLYTVFAMSLFS). The Extracellular portion of the chain corresponds to 251–264 (QSLSIDAQHTNLLS). The helical transmembrane segment at 265 to 285 (HFLRCIGVAFPSGHSCALILG) threads the bilayer. Residues 286-312 (NNKLRQASLSVIFWLRCKYKHTENQGP) are Cytoplasmic-facing.

It belongs to the G-protein coupled receptor T2R family.

It localises to the membrane. Gustducin-coupled receptor implicated in the perception of bitter compounds in the oral cavity and the gastrointestinal tract. Signals through PLCB2 and the calcium-regulated cation channel TRPM5. The protein is Taste receptor type 2 member 103 of Rattus norvegicus (Rat).